Here is a 322-residue protein sequence, read N- to C-terminus: Ribose-phosphate pyrophosphokinase (322 aa).

ATP-binding positions include 43 to 45 (DGE) and 102 to 103 (RQ). Mg(2+) contacts are provided by His137 and Asp177. Lys201 is an active-site residue. D-ribose 5-phosphate contacts are provided by residues Arg203, Asp227, and 231–235 (DTAGT).

It belongs to the ribose-phosphate pyrophosphokinase family. Class I subfamily. As to quaternary structure, homohexamer. Requires Mg(2+) as cofactor.

It localises to the cytoplasm. It carries out the reaction D-ribose 5-phosphate + ATP = 5-phospho-alpha-D-ribose 1-diphosphate + AMP + H(+). The protein operates within metabolic intermediate biosynthesis; 5-phospho-alpha-D-ribose 1-diphosphate biosynthesis; 5-phospho-alpha-D-ribose 1-diphosphate from D-ribose 5-phosphate (route I): step 1/1. In terms of biological role, involved in the biosynthesis of the central metabolite phospho-alpha-D-ribosyl-1-pyrophosphate (PRPP) via the transfer of pyrophosphoryl group from ATP to 1-hydroxyl of ribose-5-phosphate (Rib-5-P). In Xylella fastidiosa (strain 9a5c), this protein is Ribose-phosphate pyrophosphokinase.